Reading from the N-terminus, the 1133-residue chain is MSPTQWDFPVELCCRPMAFVTLTGLDVVYNAVHRAVWDAFCANRRADRVPISFKVLPGDHEYPKCRPKRTSYEWYIPKGILKTGWMNKHLNLVPALVVVFYELDWDEPQWKEKQSECATRVEIVRQSLQGRNTKVAVVLIQKKTPLPPGEDVIASERAAALCNACELSGKSLFVLPHTDHLVGYIIRLENAFYEHAQTYYYTEIRRVKSHKEFLNKTTHQLLFVRHQFKIAFFSELKQDTQNALKNYRTAYNLVHELRAHETNILEIKTMAGFINYKICRLCFQHNTPLDAIAQFRKHIDLCKKKIGSAELSFEHDAWMSKQFQAFGDLFDEAIKLGLTAIQTQNPGFYYQQAAYYAQERKQLAKTLCNHEASVMYPNPDPLETQTGVLDFYGQRSWRQGILSFDLSDPEKEKVGILAIQLKERNVVHSEIIITLLSNAVAQFKKYKCPRMKSHLMVQMGEEYYYAKDYTKALKLLDYVMCDYRSEGWWTLLTSVLTTALKCSYLMAQLKDYITYSLELLGRASTLKDDQKSRIEKNLINVLMNESPDPEPDCDILAVKTAQKLWADRISLAGSNIFTIGVQDFVPFVQCKAKFHAPSFHVDVPVQFDIYLKADCPHPIRFSKLCVSFNNQEYNQFCVIEEASKANEVLENLTQGKMCLVPGKTRKLLFKFVAKTEDVGKKIEITSVDLALGNETGRCVVLNWQGGGGDAASSQEALQAARSFKRRPKLPDNEVHWDSIIIQASTMIISRVPNISVHLLHEPPALTNEMYCLVVTVQSHEKTQIRDVKLTAGLKPGQDANLTQKTHVTLHGTELCDESYPALLTDIPVGDLHPGEQLEKMLYVRCGTVGSRMFLVYVSYLINTTVEEKEIVCKCHKDETVTIETVFPFDVAVKFVSTKFEHLERVYADIPFLLMTDLLSASPWALTIVSSELQLAPSMTTVDQLESQVDNVILQTGESASECFCLQCPSLGNIEGGVATGHYIISWKRTSAMENIPIITTVITLPHVIVENIPLHVNADLPSFGRVRESLPVKYHLQNKTDLVQDVEISVEPSDAFMFSGLKQIRLRILPGTEQEMLYNFYPLMAGYQQLPSLNINLLRFPNFTNQLLRRFIPTSIFVKPQGRLMDDTSIAAA.

Lys245 is subject to N6-acetyllysine.

This sequence belongs to the TRAPPC11 family. As to quaternary structure, component of the multisubunit TRAPP (transport protein particle) complex, which includes at least TRAPPC2, TRAPPC2L, TRAPPC3, TRAPPC3L, TRAPPC4, TRAPPC5, TRAPPC8, TRAPPC9, TRAPPC10, TRAPPC11 and TRAPPC12.

Its subcellular location is the golgi apparatus. It is found in the cis-Golgi network. In terms of biological role, involved in endoplasmic reticulum to Golgi apparatus trafficking at a very early stage. This is Trafficking protein particle complex subunit 11 (TRAPPC11) from Homo sapiens (Human).